A 212-amino-acid chain; its full sequence is 3-isopropylmalate dehydratase small subunit (212 aa).

Belongs to the LeuD family. LeuD type 1 subfamily. Heterodimer of LeuC and LeuD.

The enzyme catalyses (2R,3S)-3-isopropylmalate = (2S)-2-isopropylmalate. It participates in amino-acid biosynthesis; L-leucine biosynthesis; L-leucine from 3-methyl-2-oxobutanoate: step 2/4. In terms of biological role, catalyzes the isomerization between 2-isopropylmalate and 3-isopropylmalate, via the formation of 2-isopropylmaleate. This is 3-isopropylmalate dehydratase small subunit from Beutenbergia cavernae (strain ATCC BAA-8 / DSM 12333 / CCUG 43141 / JCM 11478 / NBRC 16432 / NCIMB 13614 / HKI 0122).